Reading from the N-terminus, the 72-residue chain is Large ribosomal subunit protein bL32 (72 aa).

The protein belongs to the bacterial ribosomal protein bL32 family.

In Dehalococcoides mccartyi (strain ATCC BAA-2100 / JCM 16839 / KCTC 5957 / BAV1), this protein is Large ribosomal subunit protein bL32.